The sequence spans 860 residues: SH2 domain-containing protein 3C (860 aa).

At Ser22 the chain carries Phosphoserine. 2 disordered regions span residues 51-117 and 130-180; these read EATQ…PPGL and PLED…PEAG. A compositionally biased stretch (basic and acidic residues) spans 162 to 175; it reads ERPPRDVHSERAAG. In terms of domain architecture, SH2 spans 220–319; the sequence is WYHGRIPREV…QSGAIIYCPV (100 aa). A phosphotyrosine mark is found at Tyr278 and Tyr283. The segment at 335 to 537 is disordered; that stretch reads GQGSSKPASP…LSENGAPEGD (203 aa). Ser359 bears the Phosphoserine mark. Composition is skewed to low complexity over residues 405-420, 427-443, and 479-490; these read SPMSPISESPSSPAYS, AAPAAPSATALPASPVA, and SPSPSLSSYSDP. Ser440 carries the post-translational modification Phosphoserine. Positions 586 to 854 constitute a Ras-GEF domain; that stretch reads DARTLARHVT…TALSHKLEPA (269 aa). Tyr793 bears the Phosphotyrosine mark.

As to quaternary structure, component of a complex comprised of SH2D3C, BCAR1/CAS, and CRK. Within the complex, interacts with CRK and (via C-terminus) with BCAR1/CAS (via C-terminus). Interacts with NEDD9/HEF1. Interacts with EPHB2. Interacts with NEDD9/HEF1. Interacts with BCAR1/CAS. Interacts with PTK2B. In terms of assembly, interacts (via C-terminus) with BCAR1/CAS (via C-terminus). Interacts with IGF1. Post-translationally, phosphorylated by MAPK/ERK upon T-cell receptor stimulation in T-cells. As to expression, ubiquitously expressed.

It is found in the cytoplasm. It localises to the cell membrane. The protein resides in the cell projection. Its subcellular location is the axon. The protein localises to the ruffle membrane. Functionally, acts as an adapter protein that mediates cell signaling pathways involved in cellular functions such as cell adhesion and migration, tissue organization, and the regulation of the immune response. Plays a role in integrin-mediated cell adhesion through BCAR1-CRK-RAPGEF1 signaling and activation of the small GTPase RAP1. Promotes cell migration and invasion through the extracellular matrix. Required for marginal zone B-cell development and thymus-independent type 2 immune responses. Mediates migration and adhesion of B cells in the splenic marginal zone via promoting hyperphosphorylation of NEDD9/CASL. Plays a role in CXCL13-induced chemotaxis of B-cells. Plays a role in the migration of olfactory sensory neurons (OSNs) into the forebrain and the innervation of the olfactory bulb by the OSN axons during development. Required for the efficient tyrosine phosphorylation of BCAR1 in OSN axons. Its function is as follows. Important regulator of chemokine-induced, integrin-mediated T lymphocyte adhesion and migration, acting upstream of RAP1. Required for tissue-specific adhesion of T lymphocytes to peripheral tissues. Required for basal and CXCL2 stimulated serine-threonine phosphorylation of NEDD9. May be involved in the regulation of T-cell receptor-mediated IL2 production through the activation of the JNK pathway in T-cells. May be involved in the BCAR1/CAS-mediated JNK activation pathway. In Homo sapiens (Human), this protein is SH2 domain-containing protein 3C (SH2D3C).